The chain runs to 591 residues: V-type ATP synthase alpha chain (591 aa).

Residue Gly233 to Thr240 coordinates ATP.

The protein belongs to the ATPase alpha/beta chains family.

It carries out the reaction ATP + H2O + 4 H(+)(in) = ADP + phosphate + 5 H(+)(out). In terms of biological role, produces ATP from ADP in the presence of a proton gradient across the membrane. The V-type alpha chain is a catalytic subunit. This chain is V-type ATP synthase alpha chain, found in Streptococcus pneumoniae (strain Hungary19A-6).